Consider the following 466-residue polypeptide: Vacuolar-processing enzyme delta-isozyme (466 aa).

A signal peptide spans 1 to 24 (MSSPLGHFQILVFLHALLIFSAES). An N-linked (GlcNAc...) asparagine glycan is attached at Asn-137. The active site involves His-164. Residue Cys-206 is the Nucleophile of the active site. Cys-239 and Cys-253 are oxidised to a cystine. A glycan (N-linked (GlcNAc...) asparagine) is linked at Asn-322. 2 cysteine pairs are disulfide-bonded: Cys-417–Cys-447 and Cys-429–Cys-464.

Belongs to the peptidase C13 family. Post-translationally, auto-catalytic activation. As to expression, seed specific. Restricted to developing seeds at 7 days after anthesis, and, at lower levels, detected in flowers. Detected in siliques, specifically in seed coats (at protein level).

It localises to the secreted. Its subcellular location is the extracellular space. The protein localises to the cell wall. It is found in the vacuole. It carries out the reaction Hydrolysis of proteins and small molecule substrates at -Asn-|-Xaa- bonds.. Strongly inhibited by biotin-YVAD-fmk (a caspase-1 inhibitor) and by Ac-DEVD-fmk. Its function is as follows. Asparagine-specific endopeptidase that may be involved in processing of proteins targeted to vacuoles. Probably involved in post-translational proteolysis of seed storage proteins in the protein storage vacuole of developing seeds. Exhibits a caspase-1-like activity in extracellular granules. At the early stage of seed development, required for the formation of the seed coat, by regulating cell death of specific cell layers in inner integument. This Arabidopsis thaliana (Mouse-ear cress) protein is Vacuolar-processing enzyme delta-isozyme.